The sequence spans 633 residues: Pesticidal crystal protein Cry2Aa (633 aa).

It belongs to the delta endotoxin family.

Functionally, promotes colloidosmotic lysis by binding to the midgut epithelial cells of both dipteran (Aedes aegypti) and lepidopteran (Manduca sexta) larvae. The sequence is that of Pesticidal crystal protein Cry2Aa (cry2Aa) from Bacillus thuringiensis subsp. kurstaki.